We begin with the raw amino-acid sequence, 398 residues long: MSLFSAVEMAPRDPILGLNEAFNADTRPGKINLGVGVYYNEEGRIPLLRAVQAAEKARIEAHAPRGYLPIEGIAAYDQGVQKLLFGNESELLAAGRVVTTQAVGGTGALKLGADFLKRLLPDATVAISDPSWENHRALFEAAGFPVQNYRYYDAASNGVNRAGLLEDLNALPARSIVVLHACCHNPTGVDLELDDWKQVLDVLKAKGHVPFLDIAYQGFGNGIEEDAAAVRLFAQSGLSFFVSSSFSKSFSLYGERVGALSIVTESRDESARVLSQVKRVIRTNYSNPPTHGASVVSSVLNSPELRALWEQELGEMRDRIRDMRLAMVEQLAAHGAKRDFSFVGRQRGMFSYSGLTADQVERLKTEFGIYAVSTGRICVAALNKSNLETITKAIVQVL.

L-aspartate is bound by residues glycine 36, tryptophan 132, and asparagine 185. An N6-(pyridoxal phosphate)lysine modification is found at lysine 248. Arginine 376 is an L-aspartate binding site.

The protein belongs to the class-I pyridoxal-phosphate-dependent aminotransferase family. As to quaternary structure, homodimer. The cofactor is pyridoxal 5'-phosphate.

The protein localises to the cytoplasm. It catalyses the reaction L-aspartate + 2-oxoglutarate = oxaloacetate + L-glutamate. The sequence is that of Aspartate aminotransferase (aspC) from Pseudomonas aeruginosa (strain ATCC 15692 / DSM 22644 / CIP 104116 / JCM 14847 / LMG 12228 / 1C / PRS 101 / PAO1).